Consider the following 248-residue polypeptide: Mannose-binding protein C (248 aa).

The signal sequence occupies residues 1-20 (MSLFPSLPLLLLSMVAASYS). The region spanning 42-99 (GINGFPGKDGRDGTKGEKGEPGQGLRGLQGPPGKLGPPGNPGPSGSPGPKGQKGDPGK) is the Collagen-like domain. A disordered region spans residues 43 to 113 (INGFPGKDGR…DSSLAASERK (71 aa)). Proline 47 bears the 4-hydroxyproline mark. Positions 49–61 (KDGRDGTKGEKGE) are enriched in basic and acidic residues. 4-hydroxyproline occurs at positions 73, 79, 82, and 88. Residues 75-87 (KLGPPGNPGPSGS) are compositionally biased toward pro residues. Basic and acidic residues predominate over residues 93-102 (QKGDPGKSPD). A coiled-coil region spans residues 112–130 (RKALQTEMARIKKWLTFSL). The C-type lectin domain maps to 134–245 (VGNKFFLTNG…CSTSHLAVCE (112 aa)). 2 cysteine pairs are disulfide-bonded: cysteine 155-cysteine 244 and cysteine 222-cysteine 236.

Oligomeric complex of 3 or more homotrimers. Interacts with MASP1 and MASP2. Interacts with MEP1A and MEP1B and may inhibit their catalytic activity. Hydroxylation on proline residues within the sequence motif, GXPG, is most likely to be 4-hydroxy as this fits the requirement for 4-hydroxylation in vertebrates.

It is found in the secreted. Functionally, calcium-dependent lectin involved in innate immune defense. Binds mannose, fucose and N-acetylglucosamine on different microorganisms and activates the lectin complement pathway. Binds to late apoptotic cells, as well as to apoptotic blebs and to necrotic cells, but not to early apoptotic cells, facilitating their uptake by macrophages. This chain is Mannose-binding protein C (MBL2), found in Gorilla gorilla gorilla (Western lowland gorilla).